We begin with the raw amino-acid sequence, 143 residues long: 18 kDa heat shock protein (143 aa).

The region spanning 23-135 (TWSRPTAMPM…KRRRVKVGQG (113 aa)) is the sHSP domain.

This sequence belongs to the small heat shock protein (HSP20) family.

The chain is 18 kDa heat shock protein (hsp18) from Streptomyces albus G.